A 331-amino-acid polypeptide reads, in one-letter code: Probable protein phosphatase 2C 1 (331 aa).

The tract at residues 1–29 (MAASSTATRLSPPRLHAPTTPSPHLPLRR) is disordered. In terms of domain architecture, PPM-type phosphatase spans 48-292 (THLIPHPRKA…DDITVIVAQV (245 aa)). Aspartate 79, glycine 80, aspartate 210, and aspartate 283 together coordinate Mn(2+). The segment at 300–331 (DEGVDEEKGQGDEQGSAVAVASSEQKEDSITT) is disordered.

The protein belongs to the PP2C family. Mg(2+) serves as cofactor. The cofactor is Mn(2+).

The catalysed reaction is O-phospho-L-seryl-[protein] + H2O = L-seryl-[protein] + phosphate. It carries out the reaction O-phospho-L-threonyl-[protein] + H2O = L-threonyl-[protein] + phosphate. In Oryza sativa subsp. japonica (Rice), this protein is Probable protein phosphatase 2C 1.